The primary structure comprises 349 residues: GDSL esterase/lipase At2g19050 (349 aa).

Positions 1 to 23 are cleaved as a signal peptide; that stretch reads MAEAIFKALLLVIATTAFATTEA. Ser38 serves as the catalytic Nucleophile. An N-linked (GlcNAc...) asparagine glycan is attached at Asn49. Active-site residues include Asp316 and His319.

Belongs to the 'GDSL' lipolytic enzyme family.

Its subcellular location is the secreted. The chain is GDSL esterase/lipase At2g19050 from Arabidopsis thaliana (Mouse-ear cress).